Reading from the N-terminus, the 206-residue chain is Regulatory protein CysR (206 aa).

The region spanning 120-196 is the HTH crp-type domain; it reads RRAEAKLASL…DRALIVRYPE (77 aa). The H-T-H motif DNA-binding region spans 156–175; sequence HQVIAELSGSTRVTTTRLLG.

The protein resides in the cytoplasm. In terms of biological role, probably regulates the expression of genes from the sulfate permease complex. This is Regulatory protein CysR (cysR) from Synechococcus elongatus (strain ATCC 33912 / PCC 7942 / FACHB-805) (Anacystis nidulans R2).